The chain runs to 461 residues: Photosystem II CP43 reaction center protein (461 aa).

A propeptide spanning residues 1 to 2 is cleaved from the precursor; that stretch reads ME. Threonine 3 bears the N-acetylthreonine mark. Threonine 3 carries the post-translational modification Phosphothreonine. 5 consecutive transmembrane segments (helical) span residues 57–81, 122–143, 166–188, 243–263, and 279–300; these read LFEV…PHLA, LLGP…KDRN, KALY…RKIS, KPFA…LSYS, and WFNN…ASQA. Glutamate 355 contacts [CaMn4O5] cluster. Residues 435–459 traverse the membrane as a helical segment; the sequence is RARAAAAGFEKGIDRDFEPVLSMTP.

Belongs to the PsbB/PsbC family. PsbC subfamily. In terms of assembly, PSII is composed of 1 copy each of membrane proteins PsbA, PsbB, PsbC, PsbD, PsbE, PsbF, PsbH, PsbI, PsbJ, PsbK, PsbL, PsbM, PsbT, PsbX, PsbY, PsbZ, Psb30/Ycf12, at least 3 peripheral proteins of the oxygen-evolving complex and a large number of cofactors. It forms dimeric complexes. Binds multiple chlorophylls and provides some of the ligands for the Ca-4Mn-5O cluster of the oxygen-evolving complex. It may also provide a ligand for a Cl- that is required for oxygen evolution. PSII binds additional chlorophylls, carotenoids and specific lipids. serves as cofactor.

It is found in the plastid. Its subcellular location is the chloroplast thylakoid membrane. One of the components of the core complex of photosystem II (PSII). It binds chlorophyll and helps catalyze the primary light-induced photochemical processes of PSII. PSII is a light-driven water:plastoquinone oxidoreductase, using light energy to abstract electrons from H(2)O, generating O(2) and a proton gradient subsequently used for ATP formation. In Trachelium caeruleum (Blue throatwort), this protein is Photosystem II CP43 reaction center protein.